A 521-amino-acid chain; its full sequence is Cytochrome P450 1A1 (521 aa).

Substrate is bound at residue Phe229. Cys463 is a binding site for heme.

It belongs to the cytochrome P450 family. It depends on heme as a cofactor.

Its subcellular location is the endoplasmic reticulum membrane. It localises to the microsome membrane. It catalyses the reaction an organic molecule + reduced [NADPH--hemoprotein reductase] + O2 = an alcohol + oxidized [NADPH--hemoprotein reductase] + H2O + H(+). Functionally, cytochromes P450 are a group of heme-thiolate monooxygenases. They oxidize a variety of structurally unrelated compounds, including steroids, fatty acids, and xenobiotics. The polypeptide is Cytochrome P450 1A1 (cyp1a1) (Chelon auratus (Golden grey mullet)).